Reading from the N-terminus, the 343-residue chain is L-threonine 3-dehydrogenase (343 aa).

Cysteine 40 serves as a coordination point for Zn(2+). Catalysis depends on charge relay system residues threonine 42 and histidine 45. Zn(2+) is bound by residues histidine 65, glutamate 66, cysteine 95, cysteine 98, cysteine 101, and cysteine 109. Residues isoleucine 177, aspartate 197, arginine 202, leucine 264–isoleucine 266, and isoleucine 288–tyrosine 289 contribute to the NAD(+) site.

It belongs to the zinc-containing alcohol dehydrogenase family. Homotetramer. Zn(2+) serves as cofactor.

It localises to the cytoplasm. It carries out the reaction L-threonine + NAD(+) = (2S)-2-amino-3-oxobutanoate + NADH + H(+). It functions in the pathway amino-acid degradation; L-threonine degradation via oxydo-reductase pathway; glycine from L-threonine: step 1/2. Functionally, catalyzes the NAD(+)-dependent oxidation of L-threonine to 2-amino-3-ketobutyrate. The protein is L-threonine 3-dehydrogenase of Aliivibrio fischeri (strain ATCC 700601 / ES114) (Vibrio fischeri).